The sequence spans 863 residues: Disintegrin and metalloproteinase domain-containing protein 15 (863 aa).

Residues 1-17 (MRLALLWALGLLGAGSP) form the signal peptide. Residues 18–206 (LPSWPLPNIG…LGQRHIRRRR (189 aa)) constitute a propeptide that is removed on maturation. The interval 22–45 (PLPNIGGTEEQQAESEKAPREPLE) is disordered. Positions 35-44 (ESEKAPREPL) are enriched in basic and acidic residues. Positions 177–184 (HTCALSWR) match the Cysteine switch motif. Cysteine 179 provides a ligand contact to Zn(2+). Residues 207–696 (DVVTETKTVE…QLKATSSLTT (490 aa)) lie on the Extracellular side of the membrane. A Peptidase M12B domain is found at 213–414 (KTVELVIVAD…GMGSCLFERL (202 aa)). N-linked (GlcNAc...) asparagine glycosylation is present at asparagine 237. 4 disulfides stabilise this stretch: cysteine 323-cysteine 409, cysteine 365-cysteine 393, cysteine 367-cysteine 376, and cysteine 480-cysteine 500. Histidine 348 lines the Zn(2+) pocket. Glutamate 349 is a catalytic residue. 2 residues coordinate Zn(2+): histidine 352 and histidine 358. N-linked (GlcNAc...) asparagine glycans are attached at residues asparagine 389 and asparagine 392. The 88-residue stretch at 421–508 (AAFCGNMFVE…QCPPDVSLGD (88 aa)) folds into the Disintegrin domain. The short motif at 484–486 (RGD) is the Cell attachment site element. N-linked (GlcNAc...) asparagine glycosylation is found at asparagine 606 and asparagine 611. 3 cysteine pairs are disulfide-bonded: cysteine 657/cysteine 667, cysteine 661/cysteine 673, and cysteine 675/cysteine 684. An EGF-like domain is found at 657–685 (CRSKCHGHGVCDSNRHCYCEEGWAPPDCT). Residues 697 to 717 (GLLLSLLVLLVLVMLGASYWY) traverse the membrane as a helical segment. Tyrosine 715 and tyrosine 735 each carry phosphotyrosine; by HCK and LCK. At 718 to 863 (RARLHQRLCQ…PPPTVSSLYL (146 aa)) the chain is on the cytoplasmic side. The interval 736-863 (RAAQSGPSER…PPPTVSSLYL (128 aa)) is disordered. Pro residues predominate over residues 767–778 (PAPPSRPLPPDP). Basic and acidic residues predominate over residues 779 to 789 (VSKRLQAELAD). Pro residues-rich tracts occupy residues 791–800 (PNPPTRPLPA) and 813–824 (AKPPPPRKPLPA). 2 consecutive short sequence motifs (SH3-binding) follow at residues 815–821 (PPPPRKP) and 850–856 (RPAPPPP).

Interacts with ITAGV-ITGB3 (vitronectin receptor). Interacts with SH3GL2 and SNX9; this interaction occurs preferentially with ADAM15 precursor, rather than the processed form, suggesting it occurs in a secretory pathway compartment prior to the medial Golgi. Interacts with ITAG9-ITGB1. Interacts specifically with Src family protein-tyrosine kinases (PTKs). Interacts with SH3PXD2A. Interacts with ITAGV-ITGB1. Interacts with GRB2, HCK, ITSN1, ITSN2, LYN, MAPK1, MAPK3, NCF1, NCK1, nephrocystin, PTK6, SNX33, LCK and SRC. Requires Zn(2+) as cofactor. Post-translationally, the precursor is cleaved by a furin endopeptidase. Phosphorylation increases association with PTKs. In terms of tissue distribution, expressed in colon and small intestine. Expressed in airway smooth muscle and glomerular mesangial cells (at protein level). Ubiquitously expressed. Overexpressed in atherosclerotic lesions. Constitutively expressed in cultured endothelium and smooth muscle. Expressed in chondrocytes. Expressed in airway smooth muscle and glomerular mesangial cells.

Its subcellular location is the endomembrane system. The protein resides in the cell junction. The protein localises to the adherens junction. It localises to the cell projection. It is found in the cilium. Its subcellular location is the flagellum. The protein resides in the cytoplasmic vesicle. The protein localises to the secretory vesicle. It localises to the acrosome. Its activity is regulated as follows. Inhibited by hydroxamate-type metalloproteinase inhibitors such as marimastat. Inhibited by metalloproteinase inhibitor 2 (TIMP-2) and TIMP-3 at nanomolar concentrations. Not significantly inhibited by TIMP-1 at concentrations of up to 100 nM. Not activated by PMA or ionomycin. In terms of biological role, active metalloproteinase with gelatinolytic and collagenolytic activity. Plays a role in the wound healing process. Mediates both heterotypic intraepithelial cell/T-cell interactions and homotypic T-cell aggregation. Inhibits beta-1 integrin-mediated cell adhesion and migration of airway smooth muscle cells. Suppresses cell motility on or towards fibronectin possibly by driving alpha-v/beta-1 integrin (ITAGV-ITGB1) cell surface expression via ERK1/2 inactivation. Cleaves E-cadherin in response to growth factor deprivation. Plays a role in glomerular cell migration. Plays a role in pathological neovascularization. May play a role in cartilage remodeling. May be proteolytically processed, during sperm epididymal maturation and the acrosome reaction. May play a role in sperm-egg binding through its disintegrin domain. This is Disintegrin and metalloproteinase domain-containing protein 15 (ADAM15) from Homo sapiens (Human).